We begin with the raw amino-acid sequence, 120 residues long: MEYEFLKDVTGVVKVRMSMGHEAIGHWFNDEVNGHPEILAEVEAAIAGVKGSERQWQRVGREYTLLLDEEEVMIRANQLGFEGDDMEEGMNYYDEESLSFCGVEDFLAIIAAYRAFLLGR.

Belongs to the UPF0231 family.

This is UPF0231 protein ETA_08290 from Erwinia tasmaniensis (strain DSM 17950 / CFBP 7177 / CIP 109463 / NCPPB 4357 / Et1/99).